Consider the following 559-residue polypeptide: Podocan-like protein 1 (559 aa).

The N-terminal stretch at M1–T20 is a signal peptide. An N-linked (GlcNAc...) asparagine glycan is attached at N64. LRR repeat units lie at residues T66–R89, L90–S115, N117–S139, L140–E160, K161–G186, E188–P208, A209–L231, T233–K257, L258–T281, T283–K302, A303–P328, L329–H352, Q354–S373, A374–R399, L400–S423, R425–G444, L445–E470, L471–A494, E496–S515, and P517–G541.

Belongs to the small leucine-rich proteoglycan (SLRP) family. SLRP class V subfamily. Post-translationally, N-glycosylated. In terms of tissue distribution, detected in bone where it is expressed in osteoblasts and newly formed bone matrix (at protein level). Also expressed weakly in osteoclasts (at protein level). Expressed strongly in calvaria, lung and femur, and weakly in kidney.

The protein localises to the secreted. The protein resides in the extracellular space. It localises to the extracellular matrix. The sequence is that of Podocan-like protein 1 from Mus musculus (Mouse).